A 65-amino-acid chain; its full sequence is Large ribosomal subunit protein uL30 (65 aa).

This sequence belongs to the universal ribosomal protein uL30 family. In terms of assembly, part of the 50S ribosomal subunit.

The sequence is that of Large ribosomal subunit protein uL30 from Methylobacillus flagellatus (strain ATCC 51484 / DSM 6875 / VKM B-1610 / KT).